The following is a 553-amino-acid chain: Dihydroxy-acid dehydratase (553 aa).

Aspartate 78 serves as a coordination point for Mg(2+). Cysteine 119 provides a ligand contact to [2Fe-2S] cluster. The Mg(2+) site is built by aspartate 120 and lysine 121. Position 121 is an N6-carboxylysine (lysine 121). Residue cysteine 193 coordinates [2Fe-2S] cluster. Glutamate 441 lines the Mg(2+) pocket. The active-site Proton acceptor is serine 467.

The protein belongs to the IlvD/Edd family. In terms of assembly, homodimer. [2Fe-2S] cluster serves as cofactor. It depends on Mg(2+) as a cofactor.

The catalysed reaction is (2R)-2,3-dihydroxy-3-methylbutanoate = 3-methyl-2-oxobutanoate + H2O. It carries out the reaction (2R,3R)-2,3-dihydroxy-3-methylpentanoate = (S)-3-methyl-2-oxopentanoate + H2O. The protein operates within amino-acid biosynthesis; L-isoleucine biosynthesis; L-isoleucine from 2-oxobutanoate: step 3/4. It participates in amino-acid biosynthesis; L-valine biosynthesis; L-valine from pyruvate: step 3/4. Its function is as follows. Functions in the biosynthesis of branched-chain amino acids. Catalyzes the dehydration of (2R,3R)-2,3-dihydroxy-3-methylpentanoate (2,3-dihydroxy-3-methylvalerate) into 2-oxo-3-methylpentanoate (2-oxo-3-methylvalerate) and of (2R)-2,3-dihydroxy-3-methylbutanoate (2,3-dihydroxyisovalerate) into 2-oxo-3-methylbutanoate (2-oxoisovalerate), the penultimate precursor to L-isoleucine and L-valine, respectively. The chain is Dihydroxy-acid dehydratase from Geotalea daltonii (strain DSM 22248 / JCM 15807 / FRC-32) (Geobacter daltonii).